The sequence spans 373 residues: Probable G-protein coupled receptor 173 (373 aa).

Residues 1–26 lie on the Extracellular side of the membrane; it reads MANTTGEPEEVSGALSLPSASAYVKL. Asn-3 carries N-linked (GlcNAc...) asparagine glycosylation. Residues 27–47 form a helical membrane-spanning segment; that stretch reads VLLGLIMCVSLAGNAILSLLV. Residues 48–59 are Cytoplasmic-facing; the sequence is LKERALHKAPYY. A helical membrane pass occupies residues 60-80; sequence FLLDLCLADGIRSAICFPFVL. At 81–97 the chain is on the extracellular side; sequence ASVRHGSSWTFSALSCK. Cys-96 and Cys-174 form a disulfide bridge. Residues 98-118 traverse the membrane as a helical segment; the sequence is IVAFMAVLFCFHAAFMLFCIS. Topologically, residues 119–139 are cytoplasmic; the sequence is VTRYMAIAHHRFYAKRMTLWT. The helical transmembrane segment at 140 to 160 threads the bilayer; that stretch reads CAAVICMAWTLSVAMAFPPVF. Topologically, residues 161–188 are extracellular; it reads DVGTYKFIREEDQCIFEHRYFKANDTLG. Asn-184 is a glycosylation site (N-linked (GlcNAc...) asparagine). The helical transmembrane segment at 189 to 209 threads the bilayer; it reads FMLMLAVLMAATHAVYGKLLL. Over 210–287 the chain is Cytoplasmic; that stretch reads FEYRHRKMKP…VKGEKQLGRM (78 aa). The chain crosses the membrane as a helical span at residues 288–308; sequence FYAITLLFLLLWSPYIVACYW. Residues 309-322 are Extracellular-facing; that stretch reads RVFVKACAVPHRYL. A helical transmembrane segment spans residues 323-343; the sequence is ATAVWMSFAQAAVNPIVCFLL. Residues 344 to 373 lie on the Cytoplasmic side of the membrane; that stretch reads NKDLKKCLRTHAPCWGTGGAPAPREPYCVM.

It belongs to the G-protein coupled receptor 1 family. In terms of tissue distribution, expressed in the ovary, specifically in granulosa cells of follicles that have passed the primary stage and in oocytes (at protein level). Expressed in preadipocytes.

The protein localises to the cell membrane. In terms of biological role, is a receptor for the SMIM20 derived peptides Phoenixin-14 and Phoenixin-20. It mediates the Phoenixin-14 and Phoenixin-20 augmentation of gonadotropin-releasing hormone (GNRH) signaling in the hypothalamus and pituitary gland. In the ovary, it mediates the effects of Phoenixin-14 and Phoenixin-20 induced granulosa cell proliferation during follicular growth. The polypeptide is Probable G-protein coupled receptor 173 (Gpr173) (Mus musculus (Mouse)).